An 87-amino-acid chain; its full sequence is Potassium channel toxin Tdi-beta-KTx (87 aa).

The first 19 residues, 1-19 (MERKLALLLLLGMITLASS), serve as a signal peptide directing secretion. Residues 20–27 (GLREKHVQ) constitute a propeptide that is removed on maturation. The region spanning 53–87 (QFGCPAYEGYCMNHCQDIERHDGSCHGFKCKCEKS) is the BetaSPN-type CS-alpha/beta domain. Intrachain disulfides connect Cys56/Cys77, Cys63/Cys82, and Cys67/Cys84.

Expressed by the venom gland.

It localises to the secreted. Inhibits voltage-gated potassium channel. This Tityus discrepans (Venezuelan scorpion) protein is Potassium channel toxin Tdi-beta-KTx.